A 146-amino-acid chain; its full sequence is Deoxyuridine 5'-triphosphate nucleotidohydrolase (146 aa).

Residues 60-62 (RSG), asparagine 73, and 77-79 (VID) each bind substrate.

Belongs to the dUTPase family. Mg(2+) serves as cofactor.

The enzyme catalyses dUTP + H2O = dUMP + diphosphate + H(+). It functions in the pathway pyrimidine metabolism; dUMP biosynthesis; dUMP from dCTP (dUTP route): step 2/2. Its function is as follows. This enzyme is involved in nucleotide metabolism: it produces dUMP, the immediate precursor of thymidine nucleotides and it decreases the intracellular concentration of dUTP so that uracil cannot be incorporated into DNA. The protein is Deoxyuridine 5'-triphosphate nucleotidohydrolase of Tropheryma whipplei (strain TW08/27) (Whipple's bacillus).